A 474-amino-acid chain; its full sequence is Serine/threonine-protein kinase ksp1 (474 aa).

The Protein kinase domain occupies 9–280; the sequence is YKVERPLNKG…EAVLAVTKWT (272 aa). Residues 15 to 23 and Lys43 contribute to the ATP site; that span reads LNKGSYGTV. The active-site Proton acceptor is the Asp137. The tract at residues 345–373 is disordered; that stretch reads VDENISTSSSPRSPASLAPVNNSERSYDS. Over residues 350–363 the composition is skewed to low complexity; that stretch reads STSSSPRSPASLAP. Phosphoserine occurs at positions 353, 354, 357, 378, 404, and 413.

The protein belongs to the protein kinase superfamily. Ser/Thr protein kinase family.

It is found in the cytoplasm. It localises to the nucleus. The catalysed reaction is L-seryl-[protein] + ATP = O-phospho-L-seryl-[protein] + ADP + H(+). It carries out the reaction L-threonyl-[protein] + ATP = O-phospho-L-threonyl-[protein] + ADP + H(+). The polypeptide is Serine/threonine-protein kinase ksp1 (ksp1) (Schizosaccharomyces pombe (strain 972 / ATCC 24843) (Fission yeast)).